The chain runs to 96 residues: UPF0235 protein YPN_3141 (96 aa).

It belongs to the UPF0235 family.

The polypeptide is UPF0235 protein YPN_3141 (Yersinia pestis bv. Antiqua (strain Nepal516)).